Reading from the N-terminus, the 467-residue chain is Glutamate--tRNA ligase (467 aa).

The short motif at 9–19 (PSPTGFLHIGG) is the 'HIGH' region element. A 'KMSKS' region motif is present at residues 241–245 (KLSKR). Lysine 244 lines the ATP pocket.

This sequence belongs to the class-I aminoacyl-tRNA synthetase family. Glutamate--tRNA ligase type 1 subfamily. Monomer.

Its subcellular location is the cytoplasm. It catalyses the reaction tRNA(Glu) + L-glutamate + ATP = L-glutamyl-tRNA(Glu) + AMP + diphosphate. Catalyzes the attachment of glutamate to tRNA(Glu) in a two-step reaction: glutamate is first activated by ATP to form Glu-AMP and then transferred to the acceptor end of tRNA(Glu). The sequence is that of Glutamate--tRNA ligase from Methylobacillus flagellatus (strain ATCC 51484 / DSM 6875 / VKM B-1610 / KT).